A 482-amino-acid polypeptide reads, in one-letter code: tRNA sulfurtransferase (482 aa).

A THUMP domain is found at L61–R165. ATP-binding positions include L183–I184, K265, G287, and Q296. A disulfide bridge connects residues C344 and C456. The Rhodanese domain maps to F404–P482. Residue C456 is the Cysteine persulfide intermediate of the active site.

Belongs to the ThiI family.

It localises to the cytoplasm. The catalysed reaction is [ThiI sulfur-carrier protein]-S-sulfanyl-L-cysteine + a uridine in tRNA + 2 reduced [2Fe-2S]-[ferredoxin] + ATP + H(+) = [ThiI sulfur-carrier protein]-L-cysteine + a 4-thiouridine in tRNA + 2 oxidized [2Fe-2S]-[ferredoxin] + AMP + diphosphate. It catalyses the reaction [ThiS sulfur-carrier protein]-C-terminal Gly-Gly-AMP + S-sulfanyl-L-cysteinyl-[cysteine desulfurase] + AH2 = [ThiS sulfur-carrier protein]-C-terminal-Gly-aminoethanethioate + L-cysteinyl-[cysteine desulfurase] + A + AMP + 2 H(+). Its pathway is cofactor biosynthesis; thiamine diphosphate biosynthesis. Its function is as follows. Catalyzes the ATP-dependent transfer of a sulfur to tRNA to produce 4-thiouridine in position 8 of tRNAs, which functions as a near-UV photosensor. Also catalyzes the transfer of sulfur to the sulfur carrier protein ThiS, forming ThiS-thiocarboxylate. This is a step in the synthesis of thiazole, in the thiamine biosynthesis pathway. The sulfur is donated as persulfide by IscS. The polypeptide is tRNA sulfurtransferase (Salmonella gallinarum (strain 287/91 / NCTC 13346)).